A 39-amino-acid chain; its full sequence is Ribonuclease UK114 (39 aa).

The protein belongs to the RutC family. Monomer. Post-translationally, the N-terminus may be blocked. As to expression, mainly expressed in the liver and kidney. Lower expression found in intestine, gizzard, glandular stomach, heart, brain and spleen.

It is found in the cytoplasm. Endoribonuclease responsible for the inhibition of the translation by cleaving mRNA. Inhibits cell-free protein synthesis. Cleaves phosphodiester bonds only in single-stranded RNA. In Gallus gallus (Chicken), this protein is Ribonuclease UK114.